The primary structure comprises 110 residues: Insulin (110 aa).

The N-terminal stretch at Met1 to Ala24 is a signal peptide. Intrachain disulfides connect Cys31-Cys96, Cys43-Cys109, and Cys95-Cys100. A propeptide spans Glu57 to Gln87 (c peptide).

The protein belongs to the insulin family. Heterodimer of a B chain and an A chain linked by two disulfide bonds.

The protein localises to the secreted. Its function is as follows. Insulin decreases blood glucose concentration. It increases cell permeability to monosaccharides, amino acids and fatty acids. It accelerates glycolysis, the pentose phosphate cycle, and glycogen synthesis in liver. The polypeptide is Insulin (INS) (Canis lupus familiaris (Dog)).